Consider the following 278-residue polypeptide: MEENMEEGQTQKGCFECCIKCLGGIPYASLIATILLYAGVALFCGCGHEALSGTVNILQTYFEMARTAGDTLDVFTMIDIFKYVIYGIAAAFFVYGILLMVEGFFTTGAIKDLYGDFKITTCGRCVSAWFIMLTYLFMLAWLGVTAFTSLPVYMYFNVWTICRNTTLVEGANLCLDLRQFGIVTIGEEKKICTVSENFLRMCESTELNMTFHLFIVALAGAGAAVIAMVHYLMVLSANWAYVKDACRMQKYEDIKSKEEQELHDIHSTRSKERLNAYT.

N-acetylmethionine is present on M1. Residues 1-22 lie on the Cytoplasmic side of the membrane; sequence MEENMEEGQTQKGCFECCIKCL. The chain crosses the membrane as a helical span at residues 23 to 43; sequence GGIPYASLIATILLYAGVALF. Over 44–84 the chain is Extracellular; sequence CGCGHEALSGTVNILQTYFEMARTAGDTLDVFTMIDIFKYV. A helical membrane pass occupies residues 85-105; sequence IYGIAAAFFVYGILLMVEGFF. Residues 106 to 127 are Cytoplasmic-facing; sequence TTGAIKDLYGDFKITTCGRCVS. A helical transmembrane segment spans residues 128–148; it reads AWFIMLTYLFMLAWLGVTAFT. At 149–213 the chain is on the extracellular side; the sequence is SLPVYMYFNV…STELNMTFHL (65 aa). N164 carries an N-linked (GlcNAc...) asparagine glycan. A disulfide bridge links C174 with C192. The N-linked (GlcNAc...) asparagine glycan is linked to N208. Residues 214-234 traverse the membrane as a helical segment; that stretch reads FIVALAGAGAAVIAMVHYLMV. At 235–278 the chain is on the cytoplasmic side; it reads LSANWAYVKDACRMQKYEDIKSKEEQELHDIHSTRSKERLNAYT. A Phosphoserine modification is found at S256. Residue T278 is modified to Phosphothreonine.

This sequence belongs to the myelin proteolipid protein family. As to quaternary structure, interacts with OPRM1. Interacts with palmitoyltransferase ZDHHC17/HIP14; the interaction leads to palmitoylation of GPM6A. Post-translationally, N-glycosylated. In terms of processing, palmitoylated by ZDHHC17/HIP14. Expressed in hippocampus (at protein level). Isoform 1 is the predominant isoform expressed in brain, specifically in hippocampus. Isoform 2 is expressed at low levels in brain and kidney.

The protein localises to the cell membrane. It localises to the cell projection. The protein resides in the axon. It is found in the growth cone. Its subcellular location is the dendritic spine. The protein localises to the filopodium. It localises to the neuron projection. In terms of biological role, involved in neuronal differentiation, including differentiation and migration of neuronal stem cells. Plays a role in neuronal plasticity and is involved in neurite and filopodia outgrowth, filopodia motility and probably synapse formation. Gpm6a-induced filopodia formation involves mitogen-activated protein kinase (MAPK) and Src signaling pathways. May be involved in neuronal NGF-dependent Ca(2+) influx. May be involved in regulation of endocytosis and intracellular trafficking of G-protein-coupled receptors (GPCRs); enhances internalization and recycling of mu-type opioid receptor. In Rattus norvegicus (Rat), this protein is Neuronal membrane glycoprotein M6-a (Gpm6a).